A 343-amino-acid polypeptide reads, in one-letter code: Methionine import ATP-binding protein MetN (343 aa).

In terms of domain architecture, ABC transporter spans 2 to 241 (IKLSNITKVF…PKTPLAQKFI (240 aa)). Residue 38–45 (GASGAGKS) participates in ATP binding.

It belongs to the ABC transporter superfamily. Methionine importer (TC 3.A.1.24) family. As to quaternary structure, the complex is composed of two ATP-binding proteins (MetN), two transmembrane proteins (MetI) and a solute-binding protein (MetQ).

Its subcellular location is the cell inner membrane. It carries out the reaction L-methionine(out) + ATP + H2O = L-methionine(in) + ADP + phosphate + H(+). The enzyme catalyses D-methionine(out) + ATP + H2O = D-methionine(in) + ADP + phosphate + H(+). In terms of biological role, part of the ABC transporter complex MetNIQ involved in methionine import. Responsible for energy coupling to the transport system. The protein is Methionine import ATP-binding protein MetN of Escherichia coli O157:H7.